A 706-amino-acid polypeptide reads, in one-letter code: Polyribonucleotide nucleotidyltransferase (706 aa).

Residues D486 and D492 each contribute to the Mg(2+) site. One can recognise a KH domain in the interval 553 to 612 (PRIHTIKISTDKIKDVIGKGGSVIRALTEETGTTIEIEDDGTVKIASTDGEKAKHAIRRI). Residues 622 to 690 (GRVYQGKVTR…RQGRVRLSIK (69 aa)) enclose the S1 motif domain.

Belongs to the polyribonucleotide nucleotidyltransferase family. As to quaternary structure, component of the RNA degradosome, which is a multiprotein complex involved in RNA processing and mRNA degradation. The cofactor is Mg(2+).

Its subcellular location is the cytoplasm. The enzyme catalyses RNA(n+1) + phosphate = RNA(n) + a ribonucleoside 5'-diphosphate. In terms of biological role, involved in mRNA degradation. Catalyzes the phosphorolysis of single-stranded polyribonucleotides processively in the 3'- to 5'-direction. This is Polyribonucleotide nucleotidyltransferase from Pectobacterium carotovorum subsp. carotovorum (strain PC1).